Consider the following 173-residue polypeptide: Crossover junction endodeoxyribonuclease RuvC (173 aa).

Catalysis depends on residues Asp-8, Glu-67, and Asp-139. 3 residues coordinate Mg(2+): Asp-8, Glu-67, and Asp-139.

Belongs to the RuvC family. Homodimer which binds Holliday junction (HJ) DNA. The HJ becomes 2-fold symmetrical on binding to RuvC with unstacked arms; it has a different conformation from HJ DNA in complex with RuvA. In the full resolvosome a probable DNA-RuvA(4)-RuvB(12)-RuvC(2) complex forms which resolves the HJ. The cofactor is Mg(2+).

Its subcellular location is the cytoplasm. It catalyses the reaction Endonucleolytic cleavage at a junction such as a reciprocal single-stranded crossover between two homologous DNA duplexes (Holliday junction).. The RuvA-RuvB-RuvC complex processes Holliday junction (HJ) DNA during genetic recombination and DNA repair. Endonuclease that resolves HJ intermediates. Cleaves cruciform DNA by making single-stranded nicks across the HJ at symmetrical positions within the homologous arms, yielding a 5'-phosphate and a 3'-hydroxyl group; requires a central core of homology in the junction. The consensus cleavage sequence is 5'-(A/T)TT(C/G)-3'. Cleavage occurs on the 3'-side of the TT dinucleotide at the point of strand exchange. HJ branch migration catalyzed by RuvA-RuvB allows RuvC to scan DNA until it finds its consensus sequence, where it cleaves and resolves the cruciform DNA. In Salmonella dublin (strain CT_02021853), this protein is Crossover junction endodeoxyribonuclease RuvC.